Consider the following 599-residue polypeptide: MKHIRNFSIIAHIDHGKSTLSDRIIQICGGLTEREMAAQVLDSMDLERERGITIKAQSVTLDYKAQDGQTYQLNFIDTPGHVDFSYEVSRSLAACEGALLVVDAGQGVEAQTLANCYTALDMNLEVVPVLNKIDLPAADPDRVAQEIEDIVGIDATDAVRCSAKTGIGVPDVLDRLVRDIPPPEGSPDEPLQALIIDSWFDNYLGVVSLVRIKNGTMRKGDKIKVMSTGQVYNADRLGIFTPKQIDRDVLNCGEVGWLVCAIKDILGAPVGDTLTLARQPAEKALPGFKKVKPQVYAGLFPISSDDYESFRDALGKLSLNDASLFYEPESSTALGFGFRCGFLGLLHMEIIQERLEREYDLDLITTAPTVVYEVETTAKETVYVDSPSKLPPLNNIQELREPIAECHMLLPQEYLGNVITLCIEKRGVQTNMVYHGNQVALTYEIPMAEVVLDFFDRLKSTSRGYASLDYSFKRFQTSDMVRVDVLINNERVDALALITHRDNSQYRGRELVEKMKDLIPRQQFDIAIQAAIGNHIIARSTVKQLRKNVLAKCYGGDVSRKKKLLQKQKDGKKRMKQVGNVELPQEAFLAILHVGKDSK.

A tr-type G domain is found at 2–184 (KHIRNFSIIA…RLVRDIPPPE (183 aa)). GTP-binding positions include 14-19 (DHGKST) and 131-134 (NKID).

This sequence belongs to the TRAFAC class translation factor GTPase superfamily. Classic translation factor GTPase family. LepA subfamily.

Its subcellular location is the cell inner membrane. It carries out the reaction GTP + H2O = GDP + phosphate + H(+). Its function is as follows. Required for accurate and efficient protein synthesis under certain stress conditions. May act as a fidelity factor of the translation reaction, by catalyzing a one-codon backward translocation of tRNAs on improperly translocated ribosomes. Back-translocation proceeds from a post-translocation (POST) complex to a pre-translocation (PRE) complex, thus giving elongation factor G a second chance to translocate the tRNAs correctly. Binds to ribosomes in a GTP-dependent manner. The chain is Elongation factor 4 from Pectobacterium carotovorum subsp. carotovorum (strain PC1).